Reading from the N-terminus, the 152-residue chain is Transcriptional regulator MraZ (152 aa).

2 SpoVT-AbrB domains span residues 5–52 (ANAV…PLPE) and 81–124 (AVDL…NEDA).

It belongs to the MraZ family. Forms oligomers.

The protein localises to the cytoplasm. Its subcellular location is the nucleoid. This chain is Transcriptional regulator MraZ, found in Azotobacter vinelandii (strain DJ / ATCC BAA-1303).